The following is a 217-amino-acid chain: 3,4-dihydroxy-2-butanone 4-phosphate synthase (217 aa).

D-ribulose 5-phosphate-binding positions include 40-41 (RE), D45, 153-157 (RRGHT), and E177. E41 is a binding site for Mg(2+). Position 156 (H156) interacts with Mg(2+).

This sequence belongs to the DHBP synthase family. Homodimer. Mg(2+) is required as a cofactor. Requires Mn(2+) as cofactor.

The enzyme catalyses D-ribulose 5-phosphate = (2S)-2-hydroxy-3-oxobutyl phosphate + formate + H(+). It functions in the pathway cofactor biosynthesis; riboflavin biosynthesis; 2-hydroxy-3-oxobutyl phosphate from D-ribulose 5-phosphate: step 1/1. Its function is as follows. Catalyzes the conversion of D-ribulose 5-phosphate to formate and 3,4-dihydroxy-2-butanone 4-phosphate. The polypeptide is 3,4-dihydroxy-2-butanone 4-phosphate synthase (Aliivibrio fischeri (Vibrio fischeri)).